Reading from the N-terminus, the 128-residue chain is Group 2 truncated hemoglobin GlbO (128 aa).

A cross-link (isodityrosine (Tyr-Tyr)) is located at residues 23 to 36; the sequence is YAQVAEDEVLRRVY. Tyr-36 is modified (3',4'-dihydroxyphenylalanine). Heme is bound at residue His-75.

The protein belongs to the truncated hemoglobin family. Group II subfamily. Homododecamer. The cofactor is heme. Contains L-DOPA (3',4'-dihydroxyphenylalanine).

This Mycobacterium bovis (strain ATCC BAA-935 / AF2122/97) protein is Group 2 truncated hemoglobin GlbO (glbO).